A 423-amino-acid polypeptide reads, in one-letter code: Transducer protein Htr13 (423 aa).

A compositionally biased stretch (polar residues) spans Met1–Val19. Positions Met1 to Ser21 are disordered. In terms of domain architecture, Methyl-accepting transducer spans Ala152 to Ala388.

Belongs to the methyl-accepting chemotaxis (MCP) protein family. Post-translationally, methylated by CheR.

Its subcellular location is the cytoplasm. In terms of biological role, potentially involved in chemo- or phototactic signal transduction. In Halobacterium salinarum (strain ATCC 29341 / DSM 671 / R1), this protein is Transducer protein Htr13 (htr13).